We begin with the raw amino-acid sequence, 187 residues long: Large ribosomal subunit protein uL6 (187 aa).

Residues 151 to 170 form a disordered region; sequence EAARIRSLRPPEPYKGKGIK.

It belongs to the universal ribosomal protein uL6 family. Part of the 50S ribosomal subunit.

Its function is as follows. This protein binds to the 23S rRNA, and is important in its secondary structure. It is located near the subunit interface in the base of the L7/L12 stalk, and near the tRNA binding site of the peptidyltransferase center. The polypeptide is Large ribosomal subunit protein uL6 (Chloroflexus aurantiacus (strain ATCC 29366 / DSM 635 / J-10-fl)).